Consider the following 504-residue polypeptide: Amyloid-beta A4 precursor protein-binding family B member 3 (504 aa).

A WW domain is found at threonine 29–tryptophan 61. 2 consecutive PID domains span residues glutamate 111–leucine 278 and serine 283–serine 438.

In terms of assembly, interacts with APP (via intracellular domain). Interacts with APLP1 and APLP2 (via intracellular domain). Expressed predominantly in brain and testis.

It localises to the cytoplasm. Its subcellular location is the nucleus. Its function is as follows. May modulate the internalization of amyloid-beta precursor protein. This Rattus norvegicus (Rat) protein is Amyloid-beta A4 precursor protein-binding family B member 3.